The sequence spans 261 residues: GTP cyclohydrolase FolE2 (261 aa).

It belongs to the GTP cyclohydrolase IV family.

The enzyme catalyses GTP + H2O = 7,8-dihydroneopterin 3'-triphosphate + formate + H(+). It functions in the pathway cofactor biosynthesis; 7,8-dihydroneopterin triphosphate biosynthesis; 7,8-dihydroneopterin triphosphate from GTP: step 1/1. Functionally, converts GTP to 7,8-dihydroneopterin triphosphate. The sequence is that of GTP cyclohydrolase FolE2 from Geobacter metallireducens (strain ATCC 53774 / DSM 7210 / GS-15).